The chain runs to 397 residues: CCA-adding enzyme (397 aa).

2 residues coordinate ATP: Gly26 and Arg29. CTP contacts are provided by Gly26 and Arg29. Residues Asp39 and Asp41 each coordinate Mg(2+). Residues Arg110, Asp153, Arg156, Arg159, and Arg162 each contribute to the ATP site. CTP is bound by residues Arg110, Asp153, Arg156, Arg159, and Arg162.

It belongs to the tRNA nucleotidyltransferase/poly(A) polymerase family. Bacterial CCA-adding enzyme type 3 subfamily. Homodimer. The cofactor is Mg(2+).

It carries out the reaction a tRNA precursor + 2 CTP + ATP = a tRNA with a 3' CCA end + 3 diphosphate. The catalysed reaction is a tRNA with a 3' CCA end + 2 CTP + ATP = a tRNA with a 3' CCACCA end + 3 diphosphate. Catalyzes the addition and repair of the essential 3'-terminal CCA sequence in tRNAs without using a nucleic acid template. Adds these three nucleotides in the order of C, C, and A to the tRNA nucleotide-73, using CTP and ATP as substrates and producing inorganic pyrophosphate. tRNA 3'-terminal CCA addition is required both for tRNA processing and repair. Also involved in tRNA surveillance by mediating tandem CCA addition to generate a CCACCA at the 3' terminus of unstable tRNAs. While stable tRNAs receive only 3'-terminal CCA, unstable tRNAs are marked with CCACCA and rapidly degraded. The protein is CCA-adding enzyme of Bacillus cereus (strain G9842).